The primary structure comprises 433 residues: UPF0761 membrane protein Sde_0901 (433 aa).

6 consecutive transmembrane segments (helical) span residues 46–66, 103–123, 142–162, 185–205, 217–237, and 247–267; these read LFAM…FPAF, LSAA…TNIE, FLLY…GLAM, FFSY…FAAV, IGGI…GWVV, and GAFA…MIIL.

It belongs to the UPF0761 family.

It localises to the cell inner membrane. The sequence is that of UPF0761 membrane protein Sde_0901 from Saccharophagus degradans (strain 2-40 / ATCC 43961 / DSM 17024).